Reading from the N-terminus, the 548-residue chain is 5-epi-aristolochene synthase (548 aa).

Residues Arg-264, Asp-301, Asp-305, Arg-441, and Asp-444 each contribute to the (2E,6E)-farnesyl diphosphate site. Positions 301 and 305 each coordinate Mg(2+). The DDXXD motif motif lies at 301–305; the sequence is DDTFD. The Mg(2+) site is built by Asp-444, Asp-445, Thr-448, and Glu-452.

The protein belongs to the terpene synthase family. As to quaternary structure, monomer. Mg(2+) is required as a cofactor. Post-translationally, self-alkylated at Tyr-520 in the presence of (2Z,6E)-farnesyl diphosphate ((Z,E)-FPP). Self-alkylated at Asp-444 at warm temperature (42 degrees Celsius) in the presence of (2E,6E)-farnesyl diphosphate ((E,E)-FPP).

It localises to the cytoplasm. It carries out the reaction (2E,6E)-farnesyl diphosphate = (+)-5-epi-aristolochene + diphosphate. The enzyme catalyses (2Z,6E)-farnesyl diphosphate = (+)-2-epi-prezizaene + diphosphate. The catalysed reaction is (2Z,6E)-farnesyl diphosphate = (-)-alpha-cedrene + diphosphate. It catalyses the reaction (2Z,6E)-farnesyl diphosphate = (-)-beta-curcumene + diphosphate. The protein operates within secondary metabolite biosynthesis; terpenoid biosynthesis. With respect to regulation, inhibited activity toward farnesyl diphosphate (FPP) by anilinogeranyl diphosphate (AGPP); AGPP undergoes a cyclization event leading to the formation of a novel macrocyclic paracyclophane alkaloid. Repressed by sesquilavandulyl diphosphate (SPP) via the induction of self-alkyation. In terms of biological role, catalyzes the cyclization of trans,trans-farnesyl diphosphate (FPP) to the bicyclic intermediate 5-epi-aristolochene, initial step in the conversion of FPP to the sesquiterpenoid antifungal phytoalexin capsidiol. Produces germacrene A as an enzyme-bound intermediate that is not released by the enzyme, but is further cyclized to produce the bicyclic 5-epi-aristolochene. Mediates, at low levels, the formation of 4-epi-eremophilene and premnaspirodiene from trans,trans-farnesyl diphosphate. Also mediates the conversion of cis,trans-farnesyl diphosphate to cisoid minor products such as (+)-2-epi-prezizaene, (-)-alpha-cedrene and, to a lesser extent, (-)-beta-curcumene; also produces, at low levels, alpha-acoradiene and 4-epi-alpha-acoradiene, but barely nerolidol, alpha-bisabolol, epi-alpha-bisabolol and cis-farnesol. This chain is 5-epi-aristolochene synthase (EAS3), found in Nicotiana tabacum (Common tobacco).